We begin with the raw amino-acid sequence, 368 residues long: MTGKGCIIELKNVSKIFEDTCALDNINLQIANGEFLTLLGPSGCGKTTILRIISGFETPDVGEILIAGVNVSGFPPERRQVNTVFQHYALFPHMTVRDNVAFGLRMQKCPREKVNELVFEALRMVHLENFADRRPSQLSGGQQQRVAIARAVVNKPLLLLLDEPFSALDHKLRQIMQLEIKHLQRKLGITFVFVTHDQEEAFAMSDRVVVMNQGRIEQIGTPQCIYEEPVNLFVARFVGEINNLAGTILSCNDEGIYEAAIANEVFPLRTPHRFSPGEAVNVLLRPEDIRIYLLDEEVLKVPHLRGRIEETVYKGATVDIIIALDVGGTLRVAEFFNEDDAEISYNEGERVAVTWVDGWEVVLPHEMA.

Residues 8 to 238 (IELKNVSKIF…PVNLFVARFV (231 aa)) enclose the ABC transporter domain. 40–47 (GPSGCGKT) serves as a coordination point for ATP.

This sequence belongs to the ABC transporter superfamily. Spermidine/putrescine importer (TC 3.A.1.11.1) family. As to quaternary structure, the complex is composed of two ATP-binding proteins (PotA), two transmembrane proteins (PotB and PotC) and a solute-binding protein (PotD).

The protein resides in the cell membrane. It carries out the reaction ATP + H2O + polyamine-[polyamine-binding protein]Side 1 = ADP + phosphate + polyamineSide 2 + [polyamine-binding protein]Side 1.. Functionally, part of the ABC transporter complex PotABCD involved in spermidine/putrescine import. Responsible for energy coupling to the transport system. The polypeptide is Spermidine/putrescine import ATP-binding protein PotA (Lawsonia intracellularis (strain PHE/MN1-00)).